A 347-amino-acid polypeptide reads, in one-letter code: Holliday junction branch migration complex subunit RuvB (347 aa).

The span at Met1–Arg10 shows a compositional bias: polar residues. Residues Met1 to Gln29 form a disordered region. Residues Pro13–Tyr198 form a large ATPase domain (RuvB-L) region. Leu37, Arg38, Gly79, Lys82, Thr83, Thr84, Arg188, Tyr198, and Arg235 together coordinate ATP. Thr83 is a Mg(2+) binding site. A small ATPAse domain (RuvB-S) region spans residues Gly199 to Arg270. Positions His273–Ala347 are head domain (RuvB-H). 2 residues coordinate DNA: Arg328 and Arg333.

The protein belongs to the RuvB family. In terms of assembly, homohexamer. Forms an RuvA(8)-RuvB(12)-Holliday junction (HJ) complex. HJ DNA is sandwiched between 2 RuvA tetramers; dsDNA enters through RuvA and exits via RuvB. An RuvB hexamer assembles on each DNA strand where it exits the tetramer. Each RuvB hexamer is contacted by two RuvA subunits (via domain III) on 2 adjacent RuvB subunits; this complex drives branch migration. In the full resolvosome a probable DNA-RuvA(4)-RuvB(12)-RuvC(2) complex forms which resolves the HJ.

It is found in the cytoplasm. The enzyme catalyses ATP + H2O = ADP + phosphate + H(+). In terms of biological role, the RuvA-RuvB-RuvC complex processes Holliday junction (HJ) DNA during genetic recombination and DNA repair, while the RuvA-RuvB complex plays an important role in the rescue of blocked DNA replication forks via replication fork reversal (RFR). RuvA specifically binds to HJ cruciform DNA, conferring on it an open structure. The RuvB hexamer acts as an ATP-dependent pump, pulling dsDNA into and through the RuvAB complex. RuvB forms 2 homohexamers on either side of HJ DNA bound by 1 or 2 RuvA tetramers; 4 subunits per hexamer contact DNA at a time. Coordinated motions by a converter formed by DNA-disengaged RuvB subunits stimulates ATP hydrolysis and nucleotide exchange. Immobilization of the converter enables RuvB to convert the ATP-contained energy into a lever motion, pulling 2 nucleotides of DNA out of the RuvA tetramer per ATP hydrolyzed, thus driving DNA branch migration. The RuvB motors rotate together with the DNA substrate, which together with the progressing nucleotide cycle form the mechanistic basis for DNA recombination by continuous HJ branch migration. Branch migration allows RuvC to scan DNA until it finds its consensus sequence, where it cleaves and resolves cruciform DNA. The protein is Holliday junction branch migration complex subunit RuvB of Synechococcus sp. (strain CC9902).